We begin with the raw amino-acid sequence, 133 residues long: DNA-directed RNA polymerase subunit omega (133 aa).

Belongs to the RNA polymerase subunit omega family. In terms of assembly, the RNAP catalytic core consists of 2 alpha, 1 beta, 1 beta' and 1 omega subunit. When a sigma factor is associated with the core the holoenzyme is formed, which can initiate transcription.

It carries out the reaction RNA(n) + a ribonucleoside 5'-triphosphate = RNA(n+1) + diphosphate. Functionally, promotes RNA polymerase assembly. Latches the N- and C-terminal regions of the beta' subunit thereby facilitating its interaction with the beta and alpha subunits. The polypeptide is DNA-directed RNA polymerase subunit omega (Brucella abortus (strain S19)).